The following is an 867-amino-acid chain: GATOR2 complex protein Mio (867 aa).

WD repeat units lie at residues 51–86 (ANESRYQYARCVAASYHSDQPIIAVGLADGKVGICN), 100–144 (RQQR…PKET), 149–188 (GVGESANSICWDRNHRTVIAGMSQKMIKLFDLRQSNATCQ), 190–228 (IQTKTVQGLSVSPNGNYLCSYVDSVITLWDPRNIKSPLR), and 231–272 (QSSK…TDNS). The segment covering 350–376 (PASPTSTAATPTQQQPTSSCSTNSGSS) has biased composition (low complexity). The tract at residues 350–378 (PASPTSTAATPTQQQPTSSCSTNSGSSLD) is disordered. A C4-type zinc finger spans residues 739–777 (LSCNFCGKSVSNALLDEPRPRSTTTSTNRLSSCPSCRKP). The Zn(2+) site is built by Cys741, Cys744, Cys771, Cys774, Cys784, Cys821, Cys824, His826, His829, His832, Cys843, Cys848, and Cys852. An RING-type; atypical zinc finger spans residues 778–857 (LPRCSLCLMH…CNCRCFDMDG (80 aa)).

This sequence belongs to the WD repeat mio family. As to quaternary structure, component of the GATOR complex consisting of mio, Nup44A/Seh1, Im11, Nplr3, Nplr2, Wdr24, Wdr59 and Sec13. Within the GATOR complex, probable component of the GATOR2 subcomplex which is likely composed of mio, Nup44A/Seh1, Wdr24, Wdr59 and Sec13. Interacts with Wdr24. Interacts with nucleoporin Nup44A/Seh1. The GATOR2 complex associates with unmet in the absence of S-adenosyl-L-methionine; the mio-Wdr24-Nup44A subcomplex is essential and sufficient for this interaction while Wdr59 and Sec13 are dispensable. This association acts as a nutrient sensor to inhibit mTORC1 signaling in the absence of methionine. As to expression, present in the oocyte.

The protein resides in the nucleus. It localises to the lysosome. Functionally, an essential component of the GATOR subcomplex GATOR2 which functions as an activator of the amino acid-sensing branch of the mTORC1 signaling pathway. The two GATOR subcomplexes, GATOR1 and GATOR2, regulate the mTORC1 pathway in order to mediate metabolic homeostasis, female gametogenesis and the response to amino acid limitation and complete starvation. GATOR2 activates the mTORC1 signaling pathway through the inhibition of the GATOR1 subcomplex, controlling the switch to cell proliferation and growth under nutrient replete conditions and during female oocyte development. This component is required for activating mTORC1 specifically in germline cells to promote cell growth and maintain the oocyte fate. GATOR1 and GATOR2 act at different stages of oogenesis to regulate mTORC1 in order to control meiotic entry and promote oocyte growth and development. After exactly four mitotic cyst divisions, the GATOR1 complex members (Iml1, Nprl2 and Nprl3) down-regulate mTORC1 to slow cellular metabolism and promote the mitotic/meiotic transition. At later stages of oogenesis, the mio and Nup44A components of the GATOR2 complex inhibit GATOR1 and thus activate mTORC1 to promote meiotic progression, and drive oocyte growth and development. In addition to its role in the regulation of the mTORC1 complex, functions independently of mTORC1 to prevent the inappropriate accumulation of autolysosomes in germline tissues. In Drosophila melanogaster (Fruit fly), this protein is GATOR2 complex protein Mio.